We begin with the raw amino-acid sequence, 591 residues long: MKYILVTGGVISGIGKGVIASSVGTILKSSNLHVTSIKIDPYINIDAGTFSPYEHGEVFVLDDGGEVDLDLGNYERFLDIRLTKDNNLTTGKIYQSVINKERKGDYLGKTVQVVPHITEAIQEWVMRQALIPVDEDGIEPEVCVIELGGTVGDIESMPFVEAFRQFQFKARRENFCNIHVSLVPQPSATGEQKTKPTQNSVRELRGLGLSPDLVVCRCSTPLDTSVKEKISMFCHVEPQQVICVHDVSSIYRVPLLLEEQGVVDYFRQRLDLPIGRQPRRLLMKWKEMADRYERLLESCSIALVGKYTKFSDSYASVIKALEHSALAINHRLEIKYIDSADLEQETLQEEPVRYHEAWQKLCSSDGILVPGGFGVRGTEGKIQAIAWARKQKKPFLGVCLGMQLAVVEFARDVLDWKDANSTEFNPKTSHPVVIDMPEHNPGQMGGTMRLGKRRTIFHSQNSVMKKLYGGHEYVEERHRHRYEVNPELRRELEARGLKFVGQDTEGERMEIVELEDHPYFVGVQYHPEFLSRPIKPSPPYFGLLLASVGRLSQYIERGCRLSPRDTYSDRSENSSPDAEIAELKLPMIDHE.

The Glutamine amidotransferase type-1 domain occupies serine 300–tyrosine 554. Residues cysteine 399, histidine 526, and glutamate 528 each act as for GATase activity in the active site. The segment covering serine 562–glutamate 572 has biased composition (basic and acidic residues). A disordered region spans residues serine 562–alanine 581.

This sequence belongs to the CTP synthase family.

It carries out the reaction UTP + L-glutamine + ATP + H2O = CTP + L-glutamate + ADP + phosphate + 2 H(+). Its pathway is pyrimidine metabolism; CTP biosynthesis via de novo pathway; CTP from UDP: step 2/2. This enzyme is involved in the de novo synthesis of CTP, a precursor of DNA, RNA and phospholipids. Catalyzes the ATP-dependent amination of UTP to CTP with either L-glutamine or ammonia as a source of nitrogen. The protein is CTP synthase 1-B (ctps1-b) of Xenopus laevis (African clawed frog).